The primary structure comprises 188 residues: Elongation factor P (188 aa).

This sequence belongs to the elongation factor P family.

The protein localises to the cytoplasm. It participates in protein biosynthesis; polypeptide chain elongation. In terms of biological role, involved in peptide bond synthesis. Stimulates efficient translation and peptide-bond synthesis on native or reconstituted 70S ribosomes in vitro. Probably functions indirectly by altering the affinity of the ribosome for aminoacyl-tRNA, thus increasing their reactivity as acceptors for peptidyl transferase. This Bifidobacterium longum (strain DJO10A) protein is Elongation factor P.